A 617-amino-acid polypeptide reads, in one-letter code: Chaperone protein DnaK (617 aa).

Position 175 is a phosphothreonine; by autocatalysis (T175). The segment covering 578-592 has biased composition (low complexity); that stretch reads AGAEAQQGAQGTQGA. Residues 578–617 form a disordered region; sequence AGAEAQQGAQGTQGADMGGNAQGKDDDNVVDADFKVEDDK. A compositionally biased stretch (basic and acidic residues) spans 600–617; it reads GKDDDNVVDADFKVEDDK.

It belongs to the heat shock protein 70 family.

Its function is as follows. Acts as a chaperone. This chain is Chaperone protein DnaK, found in Clostridium novyi (strain NT).